Here is a 718-residue protein sequence, read N- to C-terminus: Probable glycerol-3-phosphate acyltransferase, mitochondrial (718 aa).

Residues 167–172 (HRSHLD) carry the HXXXXD motif motif. A helical transmembrane segment spans residues 409 to 425 (MMCSISPVAVVSCLLLA).

The protein belongs to the GPAT/DAPAT family.

It localises to the mitochondrion membrane. The enzyme catalyses sn-glycerol 3-phosphate + an acyl-CoA = a 1-acyl-sn-glycero-3-phosphate + CoA. The protein operates within phospholipid metabolism; CDP-diacylglycerol biosynthesis; CDP-diacylglycerol from sn-glycerol 3-phosphate: step 1/3. This Caenorhabditis elegans protein is Probable glycerol-3-phosphate acyltransferase, mitochondrial (acl-6).